Reading from the N-terminus, the 248-residue chain is Probable transcriptional regulatory protein Dde_2325 (248 aa).

The segment covering 1-15 has biased composition (basic residues); the sequence is MAGHSKWKNIQHRKG. The tract at residues 1–22 is disordered; it reads MAGHSKWKNIQHRKGRQDAKKS.

This sequence belongs to the TACO1 family.

Its subcellular location is the cytoplasm. This is Probable transcriptional regulatory protein Dde_2325 from Oleidesulfovibrio alaskensis (strain ATCC BAA-1058 / DSM 17464 / G20) (Desulfovibrio alaskensis).